Consider the following 344-residue polypeptide: Heat-inducible transcription repressor HrcA (344 aa).

Belongs to the HrcA family.

Functionally, negative regulator of class I heat shock genes (grpE-dnaK-dnaJ and groELS operons). Prevents heat-shock induction of these operons. The polypeptide is Heat-inducible transcription repressor HrcA (Streptococcus pneumoniae (strain P1031)).